A 242-amino-acid polypeptide reads, in one-letter code: Biosynthetic peptidoglycan transglycosylase (242 aa).

The chain crosses the membrane as a helical span at residues 19–39 (LMVVLAIFWGGGIALFSVAPV).

The protein belongs to the glycosyltransferase 51 family.

It is found in the cell inner membrane. It carries out the reaction [GlcNAc-(1-&gt;4)-Mur2Ac(oyl-L-Ala-gamma-D-Glu-L-Lys-D-Ala-D-Ala)](n)-di-trans,octa-cis-undecaprenyl diphosphate + beta-D-GlcNAc-(1-&gt;4)-Mur2Ac(oyl-L-Ala-gamma-D-Glu-L-Lys-D-Ala-D-Ala)-di-trans,octa-cis-undecaprenyl diphosphate = [GlcNAc-(1-&gt;4)-Mur2Ac(oyl-L-Ala-gamma-D-Glu-L-Lys-D-Ala-D-Ala)](n+1)-di-trans,octa-cis-undecaprenyl diphosphate + di-trans,octa-cis-undecaprenyl diphosphate + H(+). It participates in cell wall biogenesis; peptidoglycan biosynthesis. In terms of biological role, peptidoglycan polymerase that catalyzes glycan chain elongation from lipid-linked precursors. This is Biosynthetic peptidoglycan transglycosylase from Escherichia coli O127:H6 (strain E2348/69 / EPEC).